Consider the following 531-residue polypeptide: Pyruvate kinase (531 aa).

Position 86 (Arg86) interacts with substrate. Positions 88, 90, 121, and 122 each coordinate K(+). 88–91 (NFSH) is a binding site for ATP. Residues Arg128 and Lys211 each contribute to the ATP site. Glu277 contributes to the Mg(2+) binding site. The substrate site is built by Gly300, Asp301, and Thr333. Asp301 lines the Mg(2+) pocket.

Belongs to the pyruvate kinase family. As to quaternary structure, homotetramer. Mg(2+) is required as a cofactor. Requires K(+) as cofactor.

The catalysed reaction is pyruvate + ATP = phosphoenolpyruvate + ADP + H(+). It participates in carbohydrate degradation; glycolysis; pyruvate from D-glyceraldehyde 3-phosphate: step 5/5. This is Pyruvate kinase (PYK) from Eimeria tenella (Coccidian parasite).